The following is a 700-amino-acid chain: MDFVRLARLFARARPMGLFILQHLDPCRARWAGGREGLMRPMWAPFSSSSSQLPLGQERQENTGSLGSDPSHSNSTATQEEDEEEEESFGTLSDKYSSRRLFRKSAAQFHNLRFGERRDEQMEPEPKLWRGRRNTPYWYFLQCKHLIKEGKLVEALDLFERQMLKEERLQPMESNYTVLIGGCGRVGYLKKAFNLYNQMKKRDLEPSDATYTALFNVCAESPWKDSALQSALKLRQQLQAKNFELNLKTYHALLKMAAKCADLRMCLDVFKEIIHKGHVVTEETFSFLLMGCIQDKKTGFRYALQVWRLMLSLGLQPSRDSYNLLLVAARDCGLGDPQVASELLLKPREEATVLQPPVSRQRPRRTAQAKAGNLMSAMLHVEALERQLFLEPSQALGPPEPPEARVPGKAQPEVDTKAEPSHTAALTAVALKPPPVELEVNLLTPGAVPPTVVSFGTVTTPADRLALIGGLEGFLSKMAEHRQQPDIRTLTLLAEVVESGSPAESLLLALLDEHQVEADLTFFNTLVRKKSKLGDLEGAKALLPVLAKRGLVPNLQTFCNLAIGCHRPKDGLQLLTDMKKSQVTPNTHIYSALINAAIRKLNYTYLISILKDMKQNRVPVNEVVIRQLEFAAQYPPTFDRYQGKNTYLEKIDGFRAYYKQWLTVMPAEETPHPWQKFRTKPQGDQDTGKEADDGCALGGR.

The interval 49–93 is disordered; the sequence is SSSQLPLGQERQENTGSLGSDPSHSNSTATQEEDEEEEESFGTLS. A compositionally biased stretch (polar residues) spans 62–78; that stretch reads NTGSLGSDPSHSNSTAT. The segment covering 79–88 has biased composition (acidic residues); it reads QEEDEEEEES. PPR repeat units lie at residues 135 to 171, 172 to 206, 207 to 245, 246 to 280, 281 to 317, and 318 to 354; these read TPYW…RLQP, MESN…DLEP, SDAT…NFEL, NLKT…GHVV, TEET…GLQP, and SRDS…ATVL. The disordered stretch occupies residues 393–414; it reads SQALGPPEPPEARVPGKAQPEV. 3 PPR repeats span residues 519–553, 554–585, and 586–620; these read DLTF…GLVP, NLQT…QVTP, and NTHI…RVPV. Positions 672–700 are disordered; it reads HPWQKFRTKPQGDQDTGKEADDGCALGGR. Residues 681-692 are compositionally biased toward basic and acidic residues; that stretch reads PQGDQDTGKEAD.

This sequence belongs to the PTCD1 family. As to quaternary structure, associates with mitochondrial leucine tRNAs. Interacts with ELAC2. As to expression, abundant in testes, skeletal muscle and heart.

The protein resides in the mitochondrion. It localises to the mitochondrion matrix. Its function is as follows. Mitochondrial protein implicated in negative regulation of leucine tRNA levels, as well as negative regulation of mitochondria-encoded proteins and COX activity. Also affects the 3'-processing of mitochondrial tRNAs. The sequence is that of Pentatricopeptide repeat-containing protein 1, mitochondrial (PTCD1) from Homo sapiens (Human).